Consider the following 564-residue polypeptide: Phenylalanine--tRNA ligase beta subunit (564 aa).

The B5 domain occupies 286-362 (YFQNSLKINV…IGKGLDNFKS (77 aa)). 4 residues coordinate Mg(2+): D340, D346, E349, and E350.

The protein belongs to the phenylalanyl-tRNA synthetase beta subunit family. Type 2 subfamily. Tetramer of two alpha and two beta subunits. Requires Mg(2+) as cofactor.

The protein resides in the cytoplasm. It catalyses the reaction tRNA(Phe) + L-phenylalanine + ATP = L-phenylalanyl-tRNA(Phe) + AMP + diphosphate + H(+). The polypeptide is Phenylalanine--tRNA ligase beta subunit (Borrelia recurrentis (strain A1)).